A 311-amino-acid polypeptide reads, in one-letter code: Dehydrogenase/reductase SDR family member 7C (311 aa).

The first 18 residues, 1 to 18 (MGIMAVLMLPLLLLGVSG), serve as a signal peptide directing secretion. NAD(+) contacts are provided by Ser-47, Leu-49, Tyr-191, Lys-195, and Ser-226. The Proton acceptor role is filled by Tyr-191.

This sequence belongs to the short-chain dehydrogenases/reductases (SDR) family. As to expression, expressed in skeletal muscle, cardiac muscle and skin.

Its subcellular location is the sarcoplasmic reticulum membrane. It catalyses the reaction all-trans-retinol + NAD(+) = all-trans-retinal + NADH + H(+). Functionally, NADH-dependent oxidoreductase which catalyzes the oxidation of all-trans-retinol to all-trans-retinal. Plays a role in the regulation of cardiac and skeletal muscle metabolic functions. Maintains Ca(2+) intracellular homeostasis by repressing Ca(2+) release from the sarcoplasmic reticulum (SR) in myotubes, possibly through local alternations in NAD/NADH or retinol/retinal. Also plays a role in Ca(2+) homeostasis by controlling Ca(2+) overload in the cytosol and the SR in myotubes. Involved in glucose uptake into skeletal muscles and muscle performance by activating PI3K and mTORC2-mediated AKT1 phosphorylation signaling pathways, possibly through the action of its downstream catalytic product all-trans-retinoic acid. This chain is Dehydrogenase/reductase SDR family member 7C, found in Rattus norvegicus (Rat).